Here is a 62-residue protein sequence, read N- to C-terminus: TRZGVREDPSVRAIVISVGSGATKDKVGSTGAAAKALVERENPRVRAWVTERGIVARPPTIG.

The protein belongs to the protease inhibitor I13 (potato type I serine protease inhibitor) family.

This chain is Trypsin inhibitor MCI-3, found in Momordica charantia (Bitter gourd).